The following is a 353-amino-acid chain: Phospho-furanose lactonase (353 aa).

Zn(2+) is bound by residues H25, H27, K153, H186, and H214. An N6-carboxylysine modification is found at K153. 244-245 (KY) is a binding site for substrate. Residue D272 participates in Zn(2+) binding. 275 to 278 (RILY) provides a ligand contact to substrate.

It belongs to the metallo-dependent hydrolases superfamily. Phosphotriesterase family. Zn(2+) serves as cofactor.

It catalyses the reaction a 1,4-lactone + H2O = a 4-hydroxyacid + H(+). The catalysed reaction is D-xylono-1,4-lactone 5-phosphate + H2O = 5-phospho-D-xylonate + H(+). It carries out the reaction L-arabino-1,4-lactone 5-phosphate + H2O = 5-phospho-L-arabinonate + H(+). Its function is as follows. Catalyzes the hydrolysis of D-xylono-1,4-lactone-5-phosphate and L-arabino-1,4-lactone-5-phosphate. Also able to hydrolyze carboxy 1,4-lactones. This is Phospho-furanose lactonase from Mycoplasmopsis agalactiae (strain NCTC 10123 / CIP 59.7 / PG2) (Mycoplasma agalactiae).